Consider the following 261-residue polypeptide: Secreted RxLR effector protein 154 (261 aa).

A signal peptide spans 1–18 (MRRCALLFRLFLISYSCS). A RxLR-dEER motif is present at residues 49–64 (RILQADDPEHIRTEER).

This sequence belongs to the RxLR effector family.

The protein localises to the secreted. It localises to the host cell membrane. Secreted effector that completely suppresses the host cell death induced by cell death-inducing proteins. This chain is Secreted RxLR effector protein 154, found in Plasmopara viticola (Downy mildew of grapevine).